An 89-amino-acid polypeptide reads, in one-letter code: Small ribosomal subunit protein uS15 (89 aa).

It belongs to the universal ribosomal protein uS15 family. Part of the 30S ribosomal subunit. Forms a bridge to the 50S subunit in the 70S ribosome, contacting the 23S rRNA.

In terms of biological role, one of the primary rRNA binding proteins, it binds directly to 16S rRNA where it helps nucleate assembly of the platform of the 30S subunit by binding and bridging several RNA helices of the 16S rRNA. Its function is as follows. Forms an intersubunit bridge (bridge B4) with the 23S rRNA of the 50S subunit in the ribosome. This is Small ribosomal subunit protein uS15 from Pediococcus pentosaceus (strain ATCC 25745 / CCUG 21536 / LMG 10740 / 183-1w).